Here is a 1240-residue protein sequence, read N- to C-terminus: MRNCKGLSILLCFLLVFFAMPFPAVAEEAEAMPVSEASEWSFSAFGSNTSVEKNPDPMINSDGSVKIVANGGKIASNEQGISFYYREVPSDANFEIKAKAEVLNFKGDDKQVSFGLMLMDQIGQHRNSEKHNSNYIAVGALDTIIKAFYMQESLTKTDMLSQTPSQGDIFELSIKKSGDNYVLTCNGTTETFTLPGLFSDTIYVGIYAARNAEIKFSDLNFTLDTKDIVDLSVDLSGMKTSYLVDEPLNLKGLKVTAHYSDGTSEELTEEDYIVTGFDSSTPGTNTICINVGEISKTIDLEILPLTCTKLTVKYLPAKTDYYLGDSFNPEGLKVIAEYNDGYKVTELTEDKYALYIAGKAAEDYVFSKAGTQKVEVISRENPSVKTGFEVNISDASIESLEISRKPEKTAYFIGDEPDLTGLVVYARYSDGSKVRLDKSEYEVKGFDSSAPGEKEITVYHKGKTVAFSVVVKEKEVMGIEVTKYPKTTYYIGETFNAEGLEVSKVYDNGDREPLTDFSVDASAFDGSTPGVYDVIISADGFDPITLKVTVREKTEYEWKAIRFGQSTSDSKNYVNFLDNGAVEIVALEGGGKIATDHDGITFYYTEIDAKDNFVLSADIKVKEYAKNPHDGQESFGIMARDAIGTPGDSSIFASNIAAIGGFSGGTKSPNGTQLFIRTGVSSPDGAGSKGIRRIMIKDEKPGPDNTYPAAEYRLTLAKTNSGFVGKLNDGEEVIFYEPDILNVQDSKIYVGFFAARLATIEVSNIELYVSSSETDAPRYIPPEAPVTPSLQILSLDKTSNVNYSLVVKPNVNGSITVKQGAEILVRDVTVNAGEKYSVDAVLEKNSENPFTVIFIPDDTQNLSSYEKIIKNFSVTMRTYNEGGNIYVSPNGTPYGDGTKDNPLDLDTAIAFVKEGQKIILMNGVYKRDSALVISRYNDGTAENRKYLVAEPGSRPVIDFDKKGQGVTLSGNYWYIEGIDFARSAPNYPGFIIGGNYNIVENCRFYENGDTGLQISRTDSSENIAEWPSYNKIINCESFDNRDPSENNADGFAAKLTCGVGNMFIGCVSHHNIDDGWDLYTKAGTGAIGPVIIDSCIAYENGTLTDGTVGKGDKNGFKLGGEGVPVQHIIKNSIAFNNGAVGFTSNSNPSVIAINNIAYNNAKGNLVFTSYSGIETHFVVDGFVSYNTEGAPRDSATGVPASDDNYLFDGTKSVNKSGEELTEKEFIERLLELISKIKSIK.

The N-terminal stretch at 1 to 26 is a signal peptide; the sequence is MRNCKGLSILLCFLLVFFAMPFPAVA. Has catalytic activity stretches follow at residues 27 to 551 and 545 to 1240; these read EEAE…VTVR and TLKV…KSIK. Residues Asp325, Glu349, Asp350, Asp1049, Asp1073, Asp1074, and Asp1077 each coordinate Ca(2+). Lys1117 serves as the catalytic Proton acceptor.

It belongs to the polysaccharide lyase 9 family. Ca(2+) serves as cofactor.

The protein localises to the secreted. It carries out the reaction Eliminative cleavage of (1-&gt;4)-alpha-D-galacturonan to give oligosaccharides with 4-deoxy-alpha-D-galact-4-enuronosyl groups at their non-reducing ends.. Its activity is regulated as follows. Inhibited by the metal chelator ethylenediaminetetraacetic acid (EDTA). Its function is as follows. Cleaves polygalacturonate or partially methylated pectin. When assayed on polygalacturonate or on pectin, it releases monogalacturonate as the principal product. This chain is Pectate lyase L, found in Thermoclostridium stercorarium (Clostridium stercorarium).